The following is a 583-amino-acid chain: Aspartate--tRNA ligase (583 aa).

Position 169 (Glu-169) interacts with L-aspartate. Residues 193-196 (QLFK) form an aspartate region. Arg-215 serves as a coordination point for L-aspartate. Residues 215–217 (RDE) and Gln-224 contribute to the ATP site. An L-aspartate-binding site is contributed by His-443. Glu-477 is an ATP binding site. Arg-484 provides a ligand contact to L-aspartate. 529 to 532 (GIDR) is an ATP binding site.

The protein belongs to the class-II aminoacyl-tRNA synthetase family. Type 1 subfamily. As to quaternary structure, homodimer.

It localises to the cytoplasm. The catalysed reaction is tRNA(Asp) + L-aspartate + ATP = L-aspartyl-tRNA(Asp) + AMP + diphosphate. Functionally, catalyzes the attachment of L-aspartate to tRNA(Asp) in a two-step reaction: L-aspartate is first activated by ATP to form Asp-AMP and then transferred to the acceptor end of tRNA(Asp). The protein is Aspartate--tRNA ligase of Stenotrophomonas maltophilia (strain R551-3).